A 304-amino-acid polypeptide reads, in one-letter code: Carbonic anhydrase 5A, mitochondrial (304 aa).

The N-terminal 34 residues, 1–34 (MLRAKMLGRGPYKPLAILRHMGPLCATRPQHWRF), are a transit peptide targeting the mitochondrion. An Alpha-carbonic anhydrase domain is found at 35–295 (QHSYAEKHSN…LRGRNVRSSF (261 aa)). Positions 129, 131, and 154 each coordinate Zn(2+).

The protein belongs to the alpha-carbonic anhydrase family. Zn(2+) is required as a cofactor. High in liver, also detected in heart, lung, kidney, spleen and intestine.

The protein localises to the mitochondrion. The enzyme catalyses hydrogencarbonate + H(+) = CO2 + H2O. Mitochondrial carbonic anhydrase that catalyzes the reversible conversion of carbon dioxide to bicarbonate/HCO3. Mitochondria are impermeable to HCO3, and thus this intramitochondrial carbonic anhydrase is pivotal in providing HCO3 for multiple mitochondrial enzymes that catalyze the formation of essential metabolites of intermediary metabolism in the urea and Krebs cycles. This Rattus norvegicus (Rat) protein is Carbonic anhydrase 5A, mitochondrial.